A 666-amino-acid polypeptide reads, in one-letter code: Vicilin-like antimicrobial peptides 2-1 (666 aa).

A signal peptide spans 1–27; it reads MAINTSNLCSLLFLLSLFLLSTTVSLA. Disordered stretches follow at residues 161 to 191 and 219 to 254; these read QQKR…DPQQ and QQRQ…PYYF. Cupin type-1 domains follow at residues 271-410 and 455-625; these read SVLE…EKLR and YNLF…KEVE. The tract at residues 629–655 is disordered; it reads NSQDQSIFFPGPRQHQQQSPRSTKQQQ. Positions 642-655 are enriched in low complexity; the sequence is QHQQQSPRSTKQQQ.

Belongs to the 7S seed storage protein family.

It localises to the secreted. Its function is as follows. Antimicrobial peptides 2b, 2c and 2d have antibacterial and antifungal activity against a range of species. The polypeptide is Vicilin-like antimicrobial peptides 2-1 (Macadamia integrifolia (Macadamia nut)).